The primary structure comprises 250 residues: Small ribosomal subunit protein uS2 (250 aa).

The protein belongs to the universal ribosomal protein uS2 family.

This chain is Small ribosomal subunit protein uS2, found in Paraburkholderia xenovorans (strain LB400).